The primary structure comprises 124 residues: Small ribosomal subunit protein uS12 (124 aa).

Asp-89 bears the 3-methylthioaspartic acid mark. The segment at 105-124 is disordered; the sequence is QGVKNRKQARSRYGAKKEKS. The segment covering 108–118 has biased composition (basic residues); that stretch reads KNRKQARSRYG.

The protein belongs to the universal ribosomal protein uS12 family. Part of the 30S ribosomal subunit. Contacts proteins S8 and S17. May interact with IF1 in the 30S initiation complex.

With S4 and S5 plays an important role in translational accuracy. Functionally, interacts with and stabilizes bases of the 16S rRNA that are involved in tRNA selection in the A site and with the mRNA backbone. Located at the interface of the 30S and 50S subunits, it traverses the body of the 30S subunit contacting proteins on the other side and probably holding the rRNA structure together. The combined cluster of proteins S8, S12 and S17 appears to hold together the shoulder and platform of the 30S subunit. This chain is Small ribosomal subunit protein uS12 (rpsL), found in Mycolicibacterium smegmatis (strain ATCC 700084 / mc(2)155) (Mycobacterium smegmatis).